A 515-amino-acid polypeptide reads, in one-letter code: Bifunctional purine biosynthesis protein PurH (515 aa).

Positions 1 to 145 constitute an MGS-like domain; it reads MTKRVLISVS…KNHASVTVVV (145 aa).

This sequence belongs to the PurH family.

The catalysed reaction is (6R)-10-formyltetrahydrofolate + 5-amino-1-(5-phospho-beta-D-ribosyl)imidazole-4-carboxamide = 5-formamido-1-(5-phospho-D-ribosyl)imidazole-4-carboxamide + (6S)-5,6,7,8-tetrahydrofolate. It carries out the reaction IMP + H2O = 5-formamido-1-(5-phospho-D-ribosyl)imidazole-4-carboxamide. The protein operates within purine metabolism; IMP biosynthesis via de novo pathway; 5-formamido-1-(5-phospho-D-ribosyl)imidazole-4-carboxamide from 5-amino-1-(5-phospho-D-ribosyl)imidazole-4-carboxamide (10-formyl THF route): step 1/1. It functions in the pathway purine metabolism; IMP biosynthesis via de novo pathway; IMP from 5-formamido-1-(5-phospho-D-ribosyl)imidazole-4-carboxamide: step 1/1. This is Bifunctional purine biosynthesis protein PurH from Streptococcus pneumoniae (strain Taiwan19F-14).